Consider the following 211-residue polypeptide: MFRNSYIQQNSDIQAAGGLVPMVVEQSARGERAYDIYSRLLKERVIFLVGPVEDYMANLICAQLLFLEAENPDKDIHLYINSPGGSVTAGMSIYDTMQFIKPNVSTTCIGQACSMGAFLLTAGAPGKRFCLPNSRVMIHQPLGGFQGQASDIEIHAKEILFIRERLNTLMAKHSGRTLEEIERDTNRDNFMSAEAAKEYGLIDEVINQRPA.

Catalysis depends on Ser114, which acts as the Nucleophile. His139 is an active-site residue.

The protein belongs to the peptidase S14 family. In terms of assembly, fourteen ClpP subunits assemble into 2 heptameric rings which stack back to back to give a disk-like structure with a central cavity, resembling the structure of eukaryotic proteasomes.

It is found in the cytoplasm. It catalyses the reaction Hydrolysis of proteins to small peptides in the presence of ATP and magnesium. alpha-casein is the usual test substrate. In the absence of ATP, only oligopeptides shorter than five residues are hydrolyzed (such as succinyl-Leu-Tyr-|-NHMec, and Leu-Tyr-Leu-|-Tyr-Trp, in which cleavage of the -Tyr-|-Leu- and -Tyr-|-Trp bonds also occurs).. Cleaves peptides in various proteins in a process that requires ATP hydrolysis. Has a chymotrypsin-like activity. Plays a major role in the degradation of misfolded proteins. The sequence is that of ATP-dependent Clp protease proteolytic subunit from Pseudomonas fluorescens (strain Pf0-1).